The primary structure comprises 344 residues: Cyclin-dependent kinase 20 (344 aa).

In terms of domain architecture, Protein kinase spans 4–288 (YSILGRIGEG…ARQALLHPYF (285 aa)). ATP is bound by residues 10–18 (IGEGAHGIV) and K33. D127 functions as the Proton acceptor in the catalytic mechanism.

The protein belongs to the protein kinase superfamily. CMGC Ser/Thr protein kinase family. CDC2/CDKX subfamily. In terms of assembly, monomer. Interacts with tbc1d32.

The protein localises to the nucleus. The protein resides in the cytoplasm. It is found in the cell projection. Its subcellular location is the cilium. It carries out the reaction L-seryl-[protein] + ATP = O-phospho-L-seryl-[protein] + ADP + H(+). The enzyme catalyses L-threonyl-[protein] + ATP = O-phospho-L-threonyl-[protein] + ADP + H(+). Functionally, involved in cell growth. Activates cdk2, a kinase involved in the control of the cell cycle, by phosphorylating residue 'Thr-160'. Required for high-level Shh responses in the developing neural tube. Together with tbc1d32, controls the structure of the primary cilium by coordinating assembly of the ciliary membrane and axoneme, allowing gli2 to be properly activated in response to SHH signaling. The sequence is that of Cyclin-dependent kinase 20 (cdk20) from Danio rerio (Zebrafish).